The following is a 379-amino-acid chain: Queuine tRNA-ribosyltransferase (379 aa).

The active-site Proton acceptor is D94. Residues 94–98, D148, Q191, and G218 each bind substrate; that span reads DSGGF. The interval 249–255 is RNA binding; sequence GVGSPDS. The active-site Nucleophile is D268. The tract at residues 273–277 is RNA binding; important for wobble base 34 recognition; the sequence is TRIAR. Residues C306, C308, C311, and H337 each contribute to the Zn(2+) site.

It belongs to the queuine tRNA-ribosyltransferase family. In terms of assembly, homodimer. Within each dimer, one monomer is responsible for RNA recognition and catalysis, while the other monomer binds to the replacement base PreQ1. Zn(2+) serves as cofactor.

It catalyses the reaction 7-aminomethyl-7-carbaguanine + guanosine(34) in tRNA = 7-aminomethyl-7-carbaguanosine(34) in tRNA + guanine. Its pathway is tRNA modification; tRNA-queuosine biosynthesis. Catalyzes the base-exchange of a guanine (G) residue with the queuine precursor 7-aminomethyl-7-deazaguanine (PreQ1) at position 34 (anticodon wobble position) in tRNAs with GU(N) anticodons (tRNA-Asp, -Asn, -His and -Tyr). Catalysis occurs through a double-displacement mechanism. The nucleophile active site attacks the C1' of nucleotide 34 to detach the guanine base from the RNA, forming a covalent enzyme-RNA intermediate. The proton acceptor active site deprotonates the incoming PreQ1, allowing a nucleophilic attack on the C1' of the ribose to form the product. After dissociation, two additional enzymatic reactions on the tRNA convert PreQ1 to queuine (Q), resulting in the hypermodified nucleoside queuosine (7-(((4,5-cis-dihydroxy-2-cyclopenten-1-yl)amino)methyl)-7-deazaguanosine). The protein is Queuine tRNA-ribosyltransferase of Listeria innocua serovar 6a (strain ATCC BAA-680 / CLIP 11262).